A 450-amino-acid chain; its full sequence is Tol-Pal system protein TolB (450 aa).

Positions 1–37 (MIERNGLQRMPFRLNRRHMISGMASAAVLLGSRQALG) are cleaved as a signal peptide.

This sequence belongs to the TolB family. The Tol-Pal system is composed of five core proteins: the inner membrane proteins TolA, TolQ and TolR, the periplasmic protein TolB and the outer membrane protein Pal. They form a network linking the inner and outer membranes and the peptidoglycan layer.

It is found in the periplasm. Functionally, part of the Tol-Pal system, which plays a role in outer membrane invagination during cell division and is important for maintaining outer membrane integrity. This Nitrobacter winogradskyi (strain ATCC 25391 / DSM 10237 / CIP 104748 / NCIMB 11846 / Nb-255) protein is Tol-Pal system protein TolB.